Consider the following 893-residue polypeptide: MKNRKALFIPLFIIILFIAFFNKIINFIINIKWFKEVNYLTIYFTKMRAIIILMIPIFIIFFISIWMYYKSLMINKNKSVVDIGLNKNNYGKKLFFIFNFIVSIFLAYIFSSSYWYRILQFNNSVDFNVKDPIFFKDVSFYVFKLPLFESLYKVIISLLLFLVITTFIAYFILEAKYKIQSKKDINLKNINHGIKSFAGKQLAIVSGLIILFISFGHLIKIWNLVYSSNGVSFGASYTDVHATLLFYKIIVVITLISSIVTLLSIVKGKFKPVSICIGITIFLIVSQNIASFLVQNFIVKSNEKTLEQPYIKNNIDLTRKAFALDDIEIRDFDIKNDLQKQDIADNKASIDNIRINSFKPTLEFYNQVQIIRYYYTFNDIDIDRYNINGKYNQVFLAAREIDTDALNPNTWQNRHLIYTHGFGAVMNKVNSVTSEGQPDFVIKDIPPYNKTNIKLTNPRIYFGEKTNDYVIVNTKINEFDYPKEDSNKTNKYNGHAGIKMSFINRLLFAINKKDINFLLSKDIKKDSKIIINRNIVERAKKIAPFLTYDSDPYMVIYNGKIYWIIDAYTTTNRYPYSEPYDGINYIRNSAKVVIDSVDGDTNFYITDKKDPIVNNYAKIFKGLFKEEKDAPKEIREHFRYPKDLFSIQSKVLGKYHVKDPGVFYNGEDLWEVSKDQKHVEGETNTNDAPYIIMKLPDQNKEEMVLLNYFNVMKKDNMIALFGARMDGEQYGKKILYKLPSDKTVYSPYLFKQKINQDTNISKELSLWNREGSQVQYGDTIILPIKNSLLYIEPLYLRASGKNSIPEMKRVILSYNDRLVLSSSIQEGIKEIFNSKDNKINDKNEKDSTKTIDDSKLKKAQEYYNKAIEAQKNGDWTKYGEDINELGNILNNIK.

Helical transmembrane passes span isoleucine 9–isoleucine 29, alanine 49–tyrosine 69, leucine 94–tyrosine 114, valine 154–glutamate 174, leucine 202–tryptophan 222, phenylalanine 246–valine 266, and valine 273–leucine 293.

The protein belongs to the UPF0182 family.

The protein resides in the cell membrane. This is UPF0182 protein CLK_3152 from Clostridium botulinum (strain Loch Maree / Type A3).